The primary structure comprises 105 residues: uncharacterized protein (105 aa).

Low complexity predominate over residues 31 to 47 (SVNLPSPSVKPSVTPSV). The disordered stretch occupies residues 31–80 (SVNLPSPSVKPSVTPSVKKPPHVIRSDYSKPREKPAKVAKKPTVKNDKKP). A compositionally biased stretch (basic and acidic residues) spans 54 to 66 (IRSDYSKPREKPA).

This is an uncharacterized protein from Caenorhabditis elegans.